A 478-amino-acid polypeptide reads, in one-letter code: MARKTLRARRFFSLIFPFFFITSVYAEQTPVSAKTVTVEAKNETFAPQHPDQYQSWKATSEQSAREDALAEDPRLVILWAGYPFSRDYNKPRGHAYAVTDVRETLRTGAPKTAEDGPLPMACWSCKSPDVARLIQQEGEDGYFHGKWARGGPEIVNDLGCADCHNTASDDFAQGKPAITLSRPYAERAMEAIGKPFDKAGRFDQQSMVCGQCHVEYYFDGKNKAVKFPWDEGMKVENMEQYYDAIAFSDWTNSLSKTPMLKAQHPEYETWSAGIHGKNNVTCIDCHMPKVQNAEGKLYTDHKIGNPFDNFAQTCANCHTQDKASLQKVVAERKQAIHDLKIKVEDQLVHAHFEAKAAWDAGATDAEMKPILNDIRHAQWRWDLAIASHGIHMHAPEEGLRMLGSAMDKAADARTKLARLLATKGITHEIPLPDISTKEKAQKAIGLNMQQINAEKQDFLKTVVPQWEDQARKNGLLSQ.

An N-terminal signal peptide occupies residues 1-26 (MARKTLRARRFFSLIFPFFFITSVYA). Residue histidine 94 participates in heme c binding. Heme is bound by residues cysteine 122, cysteine 125, and lysine 126. Cysteine 160, cysteine 163, histidine 164, cysteine 209, cysteine 212, and histidine 213 together coordinate heme c. Positions 215, 216, 261, and 263 each coordinate Ca(2+). Tyrosine 216 contributes to the substrate binding site. Residue histidine 264 coordinates substrate. Histidine 275, cysteine 282, cysteine 285, histidine 286, histidine 301, cysteine 314, cysteine 317, histidine 318, and histidine 393 together coordinate heme c.

This sequence belongs to the cytochrome c-552 family. Ca(2+) is required as a cofactor. The cofactor is heme c.

It localises to the periplasm. It catalyses the reaction 6 Fe(III)-[cytochrome c] + NH4(+) + 2 H2O = 6 Fe(II)-[cytochrome c] + nitrite + 8 H(+). It participates in nitrogen metabolism; nitrate reduction (assimilation). Functionally, catalyzes the reduction of nitrite to ammonia, consuming six electrons in the process. The polypeptide is Cytochrome c-552 (Salmonella typhi).